Consider the following 203-residue polypeptide: MAEGDNRSSNLLAVETASLEEQLQGWGEVMLMADKVLRWERAWFPPAIMGVVSLLFLIIYYLDPSVLSGVSCFVMFLCLADYLVPILAPRIFGSNKWTTEQQQRFHEICSNLVKTRRRAVGWWKRLFSLKEEKPKMYFMTMIISLAAVAWVGQQVHNLLLTYLIVTFVLLLPGLNQHGIILKYIGMAKREINKLLKQKEKKNE.

At Met1 to Arg41 the chain is on the cytoplasmic side. Residues Ala42–Leu62 traverse the membrane as a helical segment. Residues Asp63–Ser65 lie on the Lumenal side of the membrane. The chain crosses the membrane as a helical span at residues Val66–Ile86. The Cytoplasmic portion of the chain corresponds to Leu87 to Lys133. A helical transmembrane segment spans residues Pro134–Asn175. Over Gln176–Glu203 the chain is Lumenal.

The protein belongs to the ARL6ip family. In terms of assembly, homooligomer. Heterodimer with ARL6IP5. Interacts with ARL6. Interacts with TMEM33. Interacts with ATL1. In terms of tissue distribution, expressed in the cerebral cortex, cerebellum, hippocampus, olfactory bulbs, medulla oblongate and limbic system (at protein level). Ubiquitous. Expressed in all hematopoietic cell lineages, with highest levels in early myeloid progenitor cells.

The protein resides in the endomembrane system. It localises to the endoplasmic reticulum membrane. Its subcellular location is the endoplasmic reticulum. Its function is as follows. Positively regulates SLC1A1/EAAC1-mediated glutamate transport by increasing its affinity for glutamate in a PKC activity-dependent manner. Promotes the catalytic efficiency of SLC1A1/EAAC1 probably by reducing its interaction with ARL6IP5, a negative regulator of SLC1A1/EAAC1-mediated glutamate transport. Plays a role in the formation and stabilization of endoplasmic reticulum tubules. Negatively regulates apoptosis, possibly by modulating the activity of caspase-9 (CASP9). Inhibits cleavage of CASP9-dependent substrates and downstream markers of apoptosis but not CASP9 itself. May be involved in protein transport, membrane trafficking, or cell signaling during hematopoietic maturation. The sequence is that of ADP-ribosylation factor-like protein 6-interacting protein 1 (Arl6ip1) from Mus musculus (Mouse).